A 32-amino-acid polypeptide reads, in one-letter code: Photosystem II reaction center protein T (32 aa).

Residues Ala3–Phe23 form a helical membrane-spanning segment.

Belongs to the PsbT family. As to quaternary structure, PSII is composed of 1 copy each of membrane proteins PsbA, PsbB, PsbC, PsbD, PsbE, PsbF, PsbH, PsbI, PsbJ, PsbK, PsbL, PsbM, PsbT, PsbY, PsbZ, Psb30/Ycf12, at least 3 peripheral proteins of the oxygen-evolving complex and a large number of cofactors. It forms dimeric complexes.

It localises to the plastid. The protein localises to the chloroplast thylakoid membrane. Functionally, found at the monomer-monomer interface of the photosystem II (PS II) dimer, plays a role in assembly and dimerization of PSII. PSII is a light-driven water plastoquinone oxidoreductase, using light energy to abstract electrons from H(2)O, generating a proton gradient subsequently used for ATP formation. The chain is Photosystem II reaction center protein T from Psilotum nudum (Whisk fern).